Here is a 314-residue protein sequence, read N- to C-terminus: tRNA pseudouridine synthase B (314 aa).

A substrate-binding site is contributed by His-43. Asp-48 functions as the Nucleophile in the catalytic mechanism. Residues Tyr-76, Tyr-179, and Leu-200 each contribute to the substrate site.

The protein belongs to the pseudouridine synthase TruB family. Type 1 subfamily.

The catalysed reaction is uridine(55) in tRNA = pseudouridine(55) in tRNA. Responsible for synthesis of pseudouridine from uracil-55 in the psi GC loop of transfer RNAs. This is tRNA pseudouridine synthase B from Shigella dysenteriae serotype 1 (strain Sd197).